The following is a 445-amino-acid chain: Membrane protein insertase YidC (445 aa).

5 consecutive transmembrane segments (helical) span residues 6 to 26 (VVAI…PIKV), 248 to 268 (FGWA…PLYH), 313 to 333 (ASGC…WSVI), 352 to 372 (LSAG…VASY), and 388 to 408 (GIIM…GLFL).

Belongs to the OXA1/ALB3/YidC family. Type 1 subfamily. In terms of assembly, interacts with the Sec translocase complex via SecD. Specifically interacts with transmembrane segments of nascent integral membrane proteins during membrane integration.

The protein localises to the cell inner membrane. Functionally, required for the insertion and/or proper folding and/or complex formation of integral membrane proteins into the membrane. Involved in integration of membrane proteins that insert both dependently and independently of the Sec translocase complex, as well as at least some lipoproteins. Aids folding of multispanning membrane proteins. This Thermotoga maritima (strain ATCC 43589 / DSM 3109 / JCM 10099 / NBRC 100826 / MSB8) protein is Membrane protein insertase YidC.